A 122-amino-acid polypeptide reads, in one-letter code: Large ribosomal subunit protein uL14 (122 aa).

The protein belongs to the universal ribosomal protein uL14 family. In terms of assembly, part of the 50S ribosomal subunit. Forms a cluster with proteins L3 and L19. In the 70S ribosome, L14 and L19 interact and together make contacts with the 16S rRNA in bridges B5 and B8.

Binds to 23S rRNA. Forms part of two intersubunit bridges in the 70S ribosome. In Rhodopseudomonas palustris (strain HaA2), this protein is Large ribosomal subunit protein uL14.